The following is a 61-amino-acid chain: Odorranain-A6 (61 aa).

The first 22 residues, 1–22, serve as a signal peptide directing secretion; sequence MFSMKKSLLLLFFLGTISLSLC. A propeptide spanning residues 23 to 45 is cleaved from the precursor; that stretch reads EQERDAEEEEGSENGAEDIKINR.

It belongs to the frog skin active peptide (FSAP) family. Brevinin subfamily. As to expression, expressed by the skin glands.

The protein resides in the secreted. This Odorrana hainanensis (Odor frog) protein is Odorranain-A6.